The sequence spans 212 residues: Thymidylate kinase (212 aa).

11 to 18 (GLEGAGKS) lines the ATP pocket.

The protein belongs to the thymidylate kinase family.

It catalyses the reaction dTMP + ATP = dTDP + ADP. In terms of biological role, phosphorylation of dTMP to form dTDP in both de novo and salvage pathways of dTTP synthesis. The protein is Thymidylate kinase of Vibrio vulnificus (strain CMCP6).